Reading from the N-terminus, the 292-residue chain is Ribosomal RNA small subunit methyltransferase A (292 aa).

S-adenosyl-L-methionine is bound by residues asparagine 28, leucine 30, glycine 55, glutamate 77, aspartate 103, and asparagine 123.

Belongs to the class I-like SAM-binding methyltransferase superfamily. rRNA adenine N(6)-methyltransferase family. RsmA subfamily.

Its subcellular location is the cytoplasm. The enzyme catalyses adenosine(1518)/adenosine(1519) in 16S rRNA + 4 S-adenosyl-L-methionine = N(6)-dimethyladenosine(1518)/N(6)-dimethyladenosine(1519) in 16S rRNA + 4 S-adenosyl-L-homocysteine + 4 H(+). In terms of biological role, specifically dimethylates two adjacent adenosines (A1518 and A1519) in the loop of a conserved hairpin near the 3'-end of 16S rRNA in the 30S particle. May play a critical role in biogenesis of 30S subunits. The sequence is that of Ribosomal RNA small subunit methyltransferase A from Methylobacterium radiotolerans (strain ATCC 27329 / DSM 1819 / JCM 2831 / NBRC 15690 / NCIMB 10815 / 0-1).